The primary structure comprises 290 residues: Probable adenylate kinase 2, chloroplastic (290 aa).

A compositionally biased stretch (low complexity) spans 1-10 (MASSMAATAT). A disordered region spans residues 1-37 (MASSMAATATLSPPVLSAERPTVRGGLFLPPSPATSR). Residues 1–61 (MASSMAATAT…ATRKPRSLPR (61 aa)) constitute a chloroplast transit peptide. An ATP-binding site is contributed by 83 to 88 (ASGKGT). Residues 103 to 132 (SAGDLLRAEIAAGSENGKRAKEFMEKGQLV) form an NMP region. Residues R109, 130–132 (QLV), 159–162 (GYPR), and Q166 contribute to the AMP site. ATP is bound by residues R193, R197, and 206–207 (IY). The tract at residues 196-229 (GRRLDPVTGKIYHLKYSPPENEEIASRLTQRFDD) is LID. AMP-binding residues include R226 and R237.

Belongs to the adenylate kinase family.

The protein localises to the plastid. It localises to the chloroplast. The catalysed reaction is AMP + ATP = 2 ADP. Catalyzes the reversible transfer of the terminal phosphate group between ATP and AMP. Plays an important role in cellular energy homeostasis and in adenine nucleotide metabolism. The protein is Probable adenylate kinase 2, chloroplastic of Oryza sativa subsp. japonica (Rice).